The sequence spans 215 residues: ATP phosphoribosyltransferase (215 aa).

This sequence belongs to the ATP phosphoribosyltransferase family. Short subfamily. In terms of assembly, heteromultimer composed of HisG and HisZ subunits.

The protein localises to the cytoplasm. The catalysed reaction is 1-(5-phospho-beta-D-ribosyl)-ATP + diphosphate = 5-phospho-alpha-D-ribose 1-diphosphate + ATP. It functions in the pathway amino-acid biosynthesis; L-histidine biosynthesis; L-histidine from 5-phospho-alpha-D-ribose 1-diphosphate: step 1/9. Functionally, catalyzes the condensation of ATP and 5-phosphoribose 1-diphosphate to form N'-(5'-phosphoribosyl)-ATP (PR-ATP). Has a crucial role in the pathway because the rate of histidine biosynthesis seems to be controlled primarily by regulation of HisG enzymatic activity. This is ATP phosphoribosyltransferase from Acidithiobacillus ferrooxidans (strain ATCC 23270 / DSM 14882 / CIP 104768 / NCIMB 8455) (Ferrobacillus ferrooxidans (strain ATCC 23270)).